Reading from the N-terminus, the 62-residue chain is UPF0339 protein Atu0232 (62 aa).

This sequence belongs to the UPF0339 family.

This chain is UPF0339 protein Atu0232, found in Agrobacterium fabrum (strain C58 / ATCC 33970) (Agrobacterium tumefaciens (strain C58)).